A 137-amino-acid polypeptide reads, in one-letter code: Small ribosomal subunit protein eS6 (137 aa).

A compositionally biased stretch (acidic residues) spans 114 to 127; that stretch reads LPVEEAPAEDAPES. Residues 114-137 are disordered; the sequence is LPVEEAPAEDAPESAEEKSEDKKE. The segment covering 128–137 has biased composition (basic and acidic residues); the sequence is AEEKSEDKKE.

It belongs to the eukaryotic ribosomal protein eS6 family.

The chain is Small ribosomal subunit protein eS6 from Nitrosopumilus maritimus (strain SCM1).